Consider the following 772-residue polypeptide: U3 small nucleolar RNA-associated protein 25 homolog (772 aa).

Residues 1-179 (MGKRRNRGRS…SEEFTDVKHE (179 aa)) are disordered. Promotes p53/TP53 degradation regions lie at residues 1 to 201 (MGKR…SQRP) and 589 to 651 (VQLP…KKEE). The residue at position 10 (serine 10) is a Phosphoserine. Basic and acidic residues predominate over residues 25–43 (RDFGEEHPFYDRVSKKEAK). A phosphoserine mark is found at serine 52, serine 60, and serine 64. Positions 54–70 (DSSHSESESESEQEHVS) are enriched in basic and acidic residues. Residues 84–124 (EEEEEEEEEEEEEEEEEEEEEEEEEDDSAVGDAEMNEEAGS) show a composition bias toward acidic residues. Over residues 127–136 (GSVGEAAVSE) the composition is skewed to low complexity. A compositionally biased stretch (basic and acidic residues) spans 169–179 (SSEEFTDVKHE). The represses p53/TP53 degradation stretch occupies residues 652 to 713 (LNFTHICEYT…YELPTYPHFY (62 aa)).

This sequence belongs to the UTP25 family. In terms of assembly, interacts with CAPN3; the interaction is required for CAPN3 translocation to the nucleolus. In terms of processing, phosphorylated. Phosphorylation is required to promote p53/TP53 degradation in the nucleolus which promotes cell cycle progression and liver development. In terms of tissue distribution, expressed in all tissues tested: brain, small intestine, large intestine, stomach, liver, spleen, thymus, lung, kidney and testes (at protein level).

Its subcellular location is the nucleus. It localises to the nucleolus. Functionally, component of the ribosomal small subunit processome for the biogenesis of ribosomes, functions in pre-ribosomal RNA (pre-rRNA) processing. Essential for embryonic development in part through the regulation of p53 pathway. Controls the expansion growth of digestive organs and liver. Also involved in the sympathetic neuronal development. Mediates, with CAPN3, the proteasome-independent degradation of p53/TP53. The polypeptide is U3 small nucleolar RNA-associated protein 25 homolog (Mus musculus (Mouse)).